A 78-amino-acid chain; its full sequence is Large ribosomal subunit protein bL28 (78 aa).

The protein belongs to the bacterial ribosomal protein bL28 family.

This is Large ribosomal subunit protein bL28 from Histophilus somni (strain 129Pt) (Haemophilus somnus).